Consider the following 1072-residue polypeptide: Carbamoyl phosphate synthase large chain (1072 aa).

The carboxyphosphate synthetic domain stretch occupies residues 1–401 (MPKRLDINTI…SLLKAVRSLE (401 aa)). The ATP site is built by Arg-129, Arg-169, Gly-175, Gly-176, Lys-208, Ile-210, Glu-215, Gly-241, Val-242, His-243, Gln-284, and Glu-298. An ATP-grasp 1 domain is found at 133 to 327 (RTLMQDLNEP…IAKLAAKIAV (195 aa)). Mg(2+) is bound by residues Gln-284, Glu-298, and Asn-300. Positions 284, 298, and 300 each coordinate Mn(2+). The oligomerization domain stretch occupies residues 402-546 (LGIYHLELDH…YSTYADENES (145 aa)). The segment at 547–929 (IVTDRKSVVV…ALYKGLVASG (383 aa)) is carbamoyl phosphate synthetic domain. One can recognise an ATP-grasp 2 domain in the interval 671–861 (EAALTKLGIP…MANVATKVIL (191 aa)). ATP contacts are provided by Arg-707, Arg-746, Glu-752, Gly-777, Val-778, His-779, Ser-780, Gln-820, and Glu-832. Mg(2+) is bound by residues Gln-820, Glu-832, and Asn-834. Mn(2+) is bound by residues Gln-820, Glu-832, and Asn-834. One can recognise an MGS-like domain in the interval 930-1072 (INIPTHGSVI…QTKRHEVVHA (143 aa)). The interval 930–1072 (INIPTHGSVI…QTKRHEVVHA (143 aa)) is allosteric domain.

Belongs to the CarB family. As to quaternary structure, composed of two chains; the small (or glutamine) chain promotes the hydrolysis of glutamine to ammonia, which is used by the large (or ammonia) chain to synthesize carbamoyl phosphate. Tetramer of heterodimers (alpha,beta)4. Mg(2+) serves as cofactor. It depends on Mn(2+) as a cofactor.

The enzyme catalyses hydrogencarbonate + L-glutamine + 2 ATP + H2O = carbamoyl phosphate + L-glutamate + 2 ADP + phosphate + 2 H(+). It catalyses the reaction hydrogencarbonate + NH4(+) + 2 ATP = carbamoyl phosphate + 2 ADP + phosphate + 2 H(+). The protein operates within amino-acid biosynthesis; L-arginine biosynthesis; carbamoyl phosphate from bicarbonate: step 1/1. It functions in the pathway pyrimidine metabolism; UMP biosynthesis via de novo pathway; (S)-dihydroorotate from bicarbonate: step 1/3. In terms of biological role, large subunit of the glutamine-dependent carbamoyl phosphate synthetase (CPSase). CPSase catalyzes the formation of carbamoyl phosphate from the ammonia moiety of glutamine, carbonate, and phosphate donated by ATP, constituting the first step of 2 biosynthetic pathways, one leading to arginine and/or urea and the other to pyrimidine nucleotides. The large subunit (synthetase) binds the substrates ammonia (free or transferred from glutamine from the small subunit), hydrogencarbonate and ATP and carries out an ATP-coupled ligase reaction, activating hydrogencarbonate by forming carboxy phosphate which reacts with ammonia to form carbamoyl phosphate. The sequence is that of Carbamoyl phosphate synthase large chain from Bacillus cereus (strain AH187).